The primary structure comprises 327 residues: Malate dehydrogenase (327 aa).

Position 11-17 (11-17) interacts with NAD(+); that stretch reads GAAGQIA. Substrate-binding residues include arginine 92 and arginine 98. NAD(+)-binding positions include asparagine 105, glutamine 112, and 129-131; that span reads VGN. Positions 131 and 162 each coordinate substrate. Histidine 187 serves as the catalytic Proton acceptor.

This sequence belongs to the LDH/MDH superfamily. MDH type 2 family.

The enzyme catalyses (S)-malate + NAD(+) = oxaloacetate + NADH + H(+). Catalyzes the reversible oxidation of malate to oxaloacetate. The sequence is that of Malate dehydrogenase from Nitrosospira multiformis (strain ATCC 25196 / NCIMB 11849 / C 71).